The sequence spans 414 residues: E3 ubiquitin-protein ligase makorin-2 (414 aa).

2 C3H1-type zinc fingers span residues 2 to 29 (STKQVTCRYFLHGVCREGSRCLFSHDLT) and 31 to 58 (SKPSTICKYYQRGACAYGDRCRYDHIKP). A disordered region spans residues 57 to 94 (KPPGRGSGAPADHSNRSSSSAGASAPGPGPPANTSKHL). The segment covering 73–82 (SSSSAGASAP) has biased composition (low complexity). The C3H1-type 3 zinc finger occupies 164–191 (QTSPQICPFLAAGQCQYGESCPYLHGEM). The makorin-type Cys-His stretch occupies residues 192–221 (CEICRQHVLHPHDPEQRAAHEKKCMVAFEM). The RING-type zinc-finger motif lies at 237–291 (CKICLDVVYEKSSPSERRFGILSSCAHTYCLNCIRQWRCVEQLHNQIRKSCPECR). The C3H1-type 4 zinc finger occupies 320 to 349 (GVSKKACKYFDQGRGTCPFGGKCFYMHAYA).

The protein resides in the cytoplasm. The protein localises to the nucleus. It carries out the reaction S-ubiquitinyl-[E2 ubiquitin-conjugating enzyme]-L-cysteine + [acceptor protein]-L-lysine = [E2 ubiquitin-conjugating enzyme]-L-cysteine + N(6)-ubiquitinyl-[acceptor protein]-L-lysine.. It participates in protein modification; protein ubiquitination. Functionally, E3 ubiquitin ligase catalyzing the covalent attachment of ubiquitin moieties onto substrate proteins. Inhibits neurogenesis and axis formation during embryonic development by modulating the phosphatidylinositol 3-kinase (PI3K) pathway. Acts downstream of PI3K and akt1 to up-regulate gsk3b mRNA expression. The polypeptide is E3 ubiquitin-protein ligase makorin-2 (mkrn2) (Danio rerio (Zebrafish)).